The primary structure comprises 339 residues: Aspartate carbamoyltransferase catalytic subunit (339 aa).

The carbamoyl phosphate site is built by R60 and T61. K88 contacts L-aspartate. R110, H143, and Q146 together coordinate carbamoyl phosphate. R183 and R254 together coordinate L-aspartate. Residues G295 and P296 each contribute to the carbamoyl phosphate site.

The protein belongs to the aspartate/ornithine carbamoyltransferase superfamily. ATCase family. As to quaternary structure, heterododecamer (2C3:3R2) of six catalytic PyrB chains organized as two trimers (C3), and six regulatory PyrI chains organized as three dimers (R2).

It carries out the reaction carbamoyl phosphate + L-aspartate = N-carbamoyl-L-aspartate + phosphate + H(+). It participates in pyrimidine metabolism; UMP biosynthesis via de novo pathway; (S)-dihydroorotate from bicarbonate: step 2/3. Its function is as follows. Catalyzes the condensation of carbamoyl phosphate and aspartate to form carbamoyl aspartate and inorganic phosphate, the committed step in the de novo pyrimidine nucleotide biosynthesis pathway. The chain is Aspartate carbamoyltransferase catalytic subunit from Prochlorococcus marinus (strain MIT 9312).